Reading from the N-terminus, the 261-residue chain is Cytochrome c oxidase subunit 3 (261 aa).

Over 1–15 (MTHQTHAYHMVNPSP) the chain is Mitochondrial matrix. A helical membrane pass occupies residues 16–34 (WPLTGALSALLMTSGLAMW). Residues 35-40 (FHFNSV) are Mitochondrial intermembrane-facing. The chain crosses the membrane as a helical span at residues 41-66 (TLLTLGLTTNMLTMYQWWRDIIREST). At 67-72 (FQGHHT) the chain is on the mitochondrial matrix side. A helical membrane pass occupies residues 73 to 105 (PTVQKGLRYGMILFIISEVLFFTGFFWAFYHSS). Residues 106 to 128 (LAPTPELGGCWPPTGISPLNPLE) are Mitochondrial intermembrane-facing. A helical membrane pass occupies residues 129-152 (VPLLNTSVLLASGVSITWAHHSLM). The Mitochondrial matrix segment spans residues 153–155 (EGN). The chain crosses the membrane as a helical span at residues 156-183 (RNHMLQALFITIALGVYFTLLQASEYYE). Residues 184 to 190 (APFTISD) are Mitochondrial intermembrane-facing. Residues 191–223 (GIYGSTFFVATGFHGLHVIIGSTFLIVCFFRQL) traverse the membrane as a helical segment. Residues 224-232 (KFHFTSNHH) lie on the Mitochondrial matrix side of the membrane. The chain crosses the membrane as a helical span at residues 233–256 (FGFEAAAWYWHFVDVVWLFLYVSI). Residues 257–261 (YWWGS) lie on the Mitochondrial intermembrane side of the membrane.

Belongs to the cytochrome c oxidase subunit 3 family. Component of the cytochrome c oxidase (complex IV, CIV), a multisubunit enzyme composed of 14 subunits. The complex is composed of a catalytic core of 3 subunits MT-CO1, MT-CO2 and MT-CO3, encoded in the mitochondrial DNA, and 11 supernumerary subunits COX4I, COX5A, COX5B, COX6A, COX6B, COX6C, COX7A, COX7B, COX7C, COX8 and NDUFA4, which are encoded in the nuclear genome. The complex exists as a monomer or a dimer and forms supercomplexes (SCs) in the inner mitochondrial membrane with NADH-ubiquinone oxidoreductase (complex I, CI) and ubiquinol-cytochrome c oxidoreductase (cytochrome b-c1 complex, complex III, CIII), resulting in different assemblies (supercomplex SCI(1)III(2)IV(1) and megacomplex MCI(2)III(2)IV(2)).

It localises to the mitochondrion inner membrane. It carries out the reaction 4 Fe(II)-[cytochrome c] + O2 + 8 H(+)(in) = 4 Fe(III)-[cytochrome c] + 2 H2O + 4 H(+)(out). Component of the cytochrome c oxidase, the last enzyme in the mitochondrial electron transport chain which drives oxidative phosphorylation. The respiratory chain contains 3 multisubunit complexes succinate dehydrogenase (complex II, CII), ubiquinol-cytochrome c oxidoreductase (cytochrome b-c1 complex, complex III, CIII) and cytochrome c oxidase (complex IV, CIV), that cooperate to transfer electrons derived from NADH and succinate to molecular oxygen, creating an electrochemical gradient over the inner membrane that drives transmembrane transport and the ATP synthase. Cytochrome c oxidase is the component of the respiratory chain that catalyzes the reduction of oxygen to water. Electrons originating from reduced cytochrome c in the intermembrane space (IMS) are transferred via the dinuclear copper A center (CU(A)) of subunit 2 and heme A of subunit 1 to the active site in subunit 1, a binuclear center (BNC) formed by heme A3 and copper B (CU(B)). The BNC reduces molecular oxygen to 2 water molecules using 4 electrons from cytochrome c in the IMS and 4 protons from the mitochondrial matrix. In Neotragus moschatus (Suni), this protein is Cytochrome c oxidase subunit 3 (MT-CO3).